A 551-amino-acid polypeptide reads, in one-letter code: Methyl-accepting chemotaxis protein I (551 aa).

Topologically, residues 1-6 (MLKRIK) are cytoplasmic. Residues 7 to 30 (IVTSLLLVLAVFGLLQLTSGGLFF) form a helical membrane-spanning segment. At 31–190 (NALKNDKENF…AVSDNNASYS (160 aa)) the chain is on the periplasmic side. The interval 64–73 (RNTLNRAGIR) is the 3 Arg may form a positively charged pocket, which binds the alpha-carboxyl group of the attractant AA. Residues 191–210 (QAMWILVGVMIVVLAVIFAV) form a helical membrane-spanning segment. Topologically, residues 211–551 (WFGIKASLVA…ADSEENWETF (341 aa)) are cytoplasmic. In terms of domain architecture, HAMP spans 216-268 (ASLVAPMNRLIDSIRHIAGGDLVKPIEVDGSNEMGQLAESLRHMQGELMRTVG). In terms of domain architecture, Methyl-accepting transducer spans 273–502 (GANAIYSGAS…ESAAAAAALE (230 aa)). Gln-297 carries the post-translational modification Glutamate methyl ester (Gln). The residue at position 304 (Glu-304) is a Glutamate methyl ester (Glu). Position 311 is a glutamate methyl ester (Gln) (Gln-311). 2 positions are modified to glutamate methyl ester (Glu): Glu-493 and Glu-502.

Belongs to the methyl-accepting chemotaxis (MCP) protein family.

It localises to the cell inner membrane. In terms of biological role, receptor for the attractant L-serine and related amino acids. Is also responsible for chemotaxis away from a wide range of repellents, including leucine, indole, and weak acids. Functionally, chemotactic-signal transducers respond to changes in the concentration of attractants and repellents in the environment, transduce a signal from the outside to the inside of the cell, and facilitate sensory adaptation through the variation of the level of methylation. Attractants increase the level of methylation while repellents decrease the level of methylation, the methyl groups are added by the methyltransferase CheR and removed by the methylesterase CheB. The sequence is that of Methyl-accepting chemotaxis protein I (tsr) from Escherichia coli (strain K12).